The primary structure comprises 215 residues: GTP-binding protein YPT6 (215 aa).

Residue 17–24 (GEQGVGKT) coordinates GTP. Residues 39 to 47 (YQATIGIDF) carry the Effector region motif. GTP is bound by residues 65 to 69 (DTAGQ) and 124 to 127 (NKSD). Positions 178–196 (NSESTPLDSENANSANQNK) are enriched in polar residues. The segment at 178-215 (NSESTPLDSENANSANQNKPGVIDISTAEEQEQSACQC) is disordered. S-geranylgeranyl cysteine attachment occurs at residues Cys213 and Cys215. Position 215 is a cysteine methyl ester (Cys215).

The protein belongs to the small GTPase superfamily. Rab family. Interacts with YIF1, YIP3 and YIP4.

The protein resides in the cell membrane. Its function is as follows. Protein transport. Might participate in post-Golgi transport. The sequence is that of GTP-binding protein YPT6 (YPT6) from Saccharomyces cerevisiae (strain ATCC 204508 / S288c) (Baker's yeast).